The chain runs to 264 residues: Virulence plasmid ParA family protein pGP5-D (264 aa).

9-16 contributes to the ATP binding site; sequence FKGGTGKT.

Belongs to the ParA family.

Required for growth within mammalian cells. The protein is Virulence plasmid ParA family protein pGP5-D of Chlamydia trachomatis.